Here is a 219-residue protein sequence, read N- to C-terminus: Protein-L-isoaspartate O-methyltransferase 2 (219 aa).

Serine 67 is a catalytic residue.

Belongs to the methyltransferase superfamily. L-isoaspartyl/D-aspartyl protein methyltransferase family.

The protein resides in the cytoplasm. The catalysed reaction is [protein]-L-isoaspartate + S-adenosyl-L-methionine = [protein]-L-isoaspartate alpha-methyl ester + S-adenosyl-L-homocysteine. In terms of biological role, catalyzes the methyl esterification of L-isoaspartyl residues in peptides and proteins that result from spontaneous decomposition of normal L-aspartyl and L-asparaginyl residues. It plays a role in the repair and/or degradation of damaged proteins. This Nitrosococcus oceani (strain ATCC 19707 / BCRC 17464 / JCM 30415 / NCIMB 11848 / C-107) protein is Protein-L-isoaspartate O-methyltransferase 2.